A 122-amino-acid chain; its full sequence is MPTTYYTDDHEWIEVEDDTATIGITKHAAEQLGEVVFIELQPEGETFVKGDEIGVVESVKAASDIFAPVTGEILEANAALVETPAELNEDPEGNSWLYKIKLSDPGELSELLDAEGYAALIG.

One can recognise a Lipoyl-binding domain in the interval 19–101; it reads TATIGITKHA…EGNSWLYKIK (83 aa). Lys-60 is subject to N6-lipoyllysine.

The protein belongs to the GcvH family. As to quaternary structure, the glycine cleavage system is composed of four proteins: P, T, L and H. (R)-lipoate is required as a cofactor.

In terms of biological role, the glycine cleavage system catalyzes the degradation of glycine. The H protein shuttles the methylamine group of glycine from the P protein to the T protein. The polypeptide is Glycine cleavage system H protein (Dinoroseobacter shibae (strain DSM 16493 / NCIMB 14021 / DFL 12)).